We begin with the raw amino-acid sequence, 485 residues long: NADH-quinone oxidoreductase subunit N (485 aa).

The next 14 membrane-spanning stretches (helical) occupy residues 8 to 28, 35 to 55, 78 to 98, 104 to 124, 125 to 145, 159 to 179, 203 to 223, 235 to 255, 271 to 291, 297 to 317, 327 to 347, 374 to 394, 408 to 427, and 449 to 469; these read LIALLPLLIVGLTVVVVMLGI, FINATLTVIGLNLALLSLYFV, GLVILASLATCTFAYPWLVGY, EFYLLVLIATLGGILLASANH, LASLFLGIELISLPLFGLVGY, YMLLSAAASSFLLFGMALLYA, VLAGMGMMIVGLGFKLSLVPF, PAPVSTFLATASKIAIFAVVM, MVLSIIAVCSILFGNLMAISQ, LLGYSSIAHLGYLLVALIAVQ, GVYLAGYLFSSLGAFGVVSLM, AVMTVMMLSLAGIPMTLGFIG, WWLTGAVVLGSAIGLYYYLR, and ALTAGGVVVLISAALVLLLGV.

This sequence belongs to the complex I subunit 2 family. In terms of assembly, NDH-1 is composed of 13 different subunits. Subunits NuoA, H, J, K, L, M, N constitute the membrane sector of the complex.

Its subcellular location is the cell inner membrane. It carries out the reaction a quinone + NADH + 5 H(+)(in) = a quinol + NAD(+) + 4 H(+)(out). NDH-1 shuttles electrons from NADH, via FMN and iron-sulfur (Fe-S) centers, to quinones in the respiratory chain. The immediate electron acceptor for the enzyme in this species is believed to be ubiquinone. Couples the redox reaction to proton translocation (for every two electrons transferred, four hydrogen ions are translocated across the cytoplasmic membrane), and thus conserves the redox energy in a proton gradient. The polypeptide is NADH-quinone oxidoreductase subunit N (Serratia proteamaculans (strain 568)).